Reading from the N-terminus, the 426-residue chain is Phosphomethylpyrimidine synthase (426 aa).

Residues Asn-65, Met-94, Tyr-123, His-162, 184–186 (SRG), 225–228 (DGMR), and Glu-264 each bind substrate. Residue His-268 participates in Zn(2+) binding. Tyr-291 serves as a coordination point for substrate. His-332 serves as a coordination point for Zn(2+). [4Fe-4S] cluster-binding residues include Cys-408, Cys-411, and Cys-415.

It belongs to the ThiC family. Requires [4Fe-4S] cluster as cofactor.

The catalysed reaction is 5-amino-1-(5-phospho-beta-D-ribosyl)imidazole + S-adenosyl-L-methionine = 4-amino-2-methyl-5-(phosphooxymethyl)pyrimidine + CO + 5'-deoxyadenosine + formate + L-methionine + 3 H(+). The protein operates within cofactor biosynthesis; thiamine diphosphate biosynthesis. Its function is as follows. Catalyzes the synthesis of the hydroxymethylpyrimidine phosphate (HMP-P) moiety of thiamine from aminoimidazole ribotide (AIR) in a radical S-adenosyl-L-methionine (SAM)-dependent reaction. The sequence is that of Phosphomethylpyrimidine synthase from Methanococcus aeolicus (strain ATCC BAA-1280 / DSM 17508 / OCM 812 / Nankai-3).